A 4306-amino-acid chain; its full sequence is Cytoplasmic dynein 2 heavy chain 1 (4306 aa).

The stem stretch occupies residues 1 to 1650 (MAGSLSDVRK…YVQMVDSELQ (1650 aa)). Residue 145–152 (LGVVLRKS) coordinates ATP. Residues 669–696 (KELEGYIQKLQNAAERLATENRRLRKWH) adopt a coiled-coil conformation. 4 AAA regions span residues 1651-1875 (YTYE…VLRG), 1941-2161 (SALK…KQND), 2249-2505 (LTAD…WVLG), and 2617-2862 (HYGR…ESCK). Residues 1689 to 1696 (GPAGTGKT), 1979 to 1986 (GPSGAGKS), 2291 to 2298 (GPEGCGKG), and 2655 to 2662 (GRSGVGRR) contribute to the ATP site. The stalk stretch occupies residues 2880–3168 (AISSSKRKEL…AEVSKAQETI (289 aa)). 3 coiled-coil regions span residues 2896-2981 (LQAG…KEVQ), 3108-3199 (LETE…LATL), and 3407-3441 (IQHE…SLLE). 2 AAA regions span residues 3243-3472 (LCTE…LIQD) and 3689-3904 (MALF…VIDR).

This sequence belongs to the dynein heavy chain family. The cytoplasmic dynein complex 2 is probably composed by a heavy chain DYNC2H1 homodimer and a number of DYNC2LI1 light intermediate chains. In terms of tissue distribution, widely expressed both in ciliated and unciliated tissues. Detected in brain and testis (at protein level).

It is found in the cytoplasm. The protein resides in the cytoskeleton. The protein localises to the cilium axoneme. Its subcellular location is the cell membrane. Its function is as follows. May function as a motor for intraflagellar retrograde transport. Functions in cilia biogenesis. May play a role in transport between endoplasmic reticulum and Golgi or organization of the Golgi in cells. This is Cytoplasmic dynein 2 heavy chain 1 (Dync2h1) from Rattus norvegicus (Rat).